The following is a 116-amino-acid chain: Class I hydrophobin 1 (116 aa).

The signal sequence occupies residues methionine 1–alanine 19. Cystine bridges form between cysteine 35–cysteine 95, cysteine 42–cysteine 89, cysteine 43–cysteine 76, and cysteine 96–cysteine 109. N-linked (GlcNAc...) asparagine glycans are attached at residues asparagine 44 and asparagine 100.

It belongs to the fungal hydrophobin family. Self-assembles to form functional amyloid fibrils called rodlets. Self-assembly into fibrillar rodlets occurs spontaneously at hydrophobic:hydrophilic interfaces and the rodlets further associate laterally to form amphipathic monolayers.

It localises to the secreted. The protein localises to the cell wall. In terms of biological role, aerial growth, conidiation, and dispersal of filamentous fungi in the environment rely upon a capability of their secreting small amphipathic proteins called hydrophobins (HPBs) with low sequence identity. Class I can self-assemble into an outermost layer of rodlet bundles on aerial cell surfaces, conferring cellular hydrophobicity that supports fungal growth, development and dispersal; whereas Class II form highly ordered films at water-air interfaces through intermolecular interactions but contribute nothing to the rodlet structure. The polypeptide is Class I hydrophobin 1 (Pleurotus ostreatus (strain PC15) (Oyster mushroom)).